Consider the following 55-residue polypeptide: Large ribosomal subunit protein bL33A (55 aa).

The protein belongs to the bacterial ribosomal protein bL33 family.

The polypeptide is Large ribosomal subunit protein bL33A (Salinispora tropica (strain ATCC BAA-916 / DSM 44818 / JCM 13857 / NBRC 105044 / CNB-440)).